Reading from the N-terminus, the 447-residue chain is Na(+)-translocating NADH-quinone reductase subunit A (447 aa).

Belongs to the NqrA family. In terms of assembly, composed of six subunits; NqrA, NqrB, NqrC, NqrD, NqrE and NqrF.

The enzyme catalyses a ubiquinone + n Na(+)(in) + NADH + H(+) = a ubiquinol + n Na(+)(out) + NAD(+). In terms of biological role, NQR complex catalyzes the reduction of ubiquinone-1 to ubiquinol by two successive reactions, coupled with the transport of Na(+) ions from the cytoplasm to the periplasm. NqrA to NqrE are probably involved in the second step, the conversion of ubisemiquinone to ubiquinol. The polypeptide is Na(+)-translocating NADH-quinone reductase subunit A (Neisseria meningitidis serogroup B (strain ATCC BAA-335 / MC58)).